The sequence spans 460 residues: MLO-like protein 9 (460 aa).

The Extracellular portion of the chain corresponds to 1–21; sequence MAGGGGGGGGEGPRQLDQTPT. The helical transmembrane segment at 22–42 threads the bilayer; the sequence is WAVSTVCGVIILISIILELII. Residues 43-67 are Cytoplasmic-facing; it reads HKVGEVFERKKKKALFEALEKIKNE. Residues 68-88 form a helical membrane-spanning segment; that stretch reads LMVLGFISLLLTFGQNYIASI. Residues 89-158 are Extracellular-facing; that stretch reads CVPSRYGHAM…ISLNALHQVH (70 aa). A helical transmembrane segment spans residues 159-179; sequence IFIFFLAVFHVIYSAITMMLG. Over 180 to 289 the chain is Cytoplasmic; that stretch reads RAKIRGWKVW…KVVVGIRPEL (110 aa). A helical transmembrane segment spans residues 290–310; the sequence is WAFVMLFLLFDVHGWYVTAVI. Residues 311 to 315 are Extracellular-facing; sequence TMIPP. A helical transmembrane segment spans residues 316 to 336; sequence LLTLAIGTKLQAIISYMALEI. The Cytoplasmic segment spans residues 337–366; sequence QERHAVIQGMPVVNVSDQHFWFEKPDLVLH. A helical membrane pass occupies residues 367–387; the sequence is MIHFVLFQNAFEITYFFWIWY. At 388–398 the chain is on the extracellular side; that stretch reads EFGLRSCFHHH. Residues 399–419 form a helical membrane-spanning segment; the sequence is FGLIIIRVCLGVGVQFLCSYI. The Cytoplasmic portion of the chain corresponds to 420–460; it reads TLPLYALVTQMGSTMKRSVFDEQTSKALEQWHKKARKKNEK. Residues 441-460 form a calmodulin-binding region; that stretch reads EQTSKALEQWHKKARKKNEK.

This sequence belongs to the MLO family.

It localises to the membrane. In terms of biological role, may be involved in modulation of pathogen defense and leaf cell death. Activity seems to be regulated by Ca(2+)-dependent calmodulin binding and seems not to require heterotrimeric G proteins. The protein is MLO-like protein 9 (MLO9) of Arabidopsis thaliana (Mouse-ear cress).